The following is a 708-amino-acid chain: Nicastrin (708 aa).

Positions 1-34 are cleaved as a signal peptide; the sequence is MATARGGSGPDPGSRGLLLLSFSVVLAGLCGGNS. Topologically, residues 35–668 are lumenal; the sequence is VERKIYIPLN…IFLIASKELE (634 aa). 3 N-linked (GlcNAc...) asparagine glycosylation sites follow: Asn-44, Asn-54, and Asn-128. Cys-49 and Cys-61 form a disulfide bridge. Cys-139 and Cys-158 are disulfide-bonded. Asn-186 and Asn-203 each carry an N-linked (GlcNAc...) asparagine glycan. Intrachain disulfides connect Cys-194-Cys-212 and Cys-229-Cys-247. N-linked (GlcNAc...) asparagine glycans are attached at residues Asn-263, Asn-386, Asn-434, Asn-463, Asn-507, Asn-529, Asn-561, Asn-572, Asn-579, Asn-593, and Asn-611. Cys-585 and Cys-619 are joined by a disulfide. A helical membrane pass occupies residues 669 to 689; sequence FITLIVGFSILVFSLIVTYCI. Residues 690-708 lie on the Cytoplasmic side of the membrane; the sequence is NAKADVLFVAPREPGAVSY.

Belongs to the nicastrin family. As to quaternary structure, component of the gamma-secretase complex. The functional gamma-secretase complex is composed of at least four polypeptides: a presenilin homodimer (PSEN1 or PSEN2), nicastrin (NCSTN), APH1 (APH1A or APH1B) and PEN2. Binds to proteolytic processed C-terminal fragments C83 and C99 of the amyloid precursor protein (APP). Interacts with PSEN1 and PSEN2. Post-translationally, N-glycosylated.

Its subcellular location is the membrane. The protein resides in the cytoplasmic vesicle membrane. It is found in the melanosome. Essential subunit of the gamma-secretase complex, an endoprotease complex that catalyzes the intramembrane cleavage of integral membrane proteins such as Notch receptors and APP (amyloid-beta precursor protein). The gamma-secretase complex plays a role in Notch and Wnt signaling cascades and regulation of downstream processes via its role in processing key regulatory proteins, and by regulating cytosolic CTNNB1 levels. This chain is Nicastrin (Ncstn), found in Rattus norvegicus (Rat).